A 523-amino-acid chain; its full sequence is Arabinose import ATP-binding protein AraG (523 aa).

2 consecutive ABC transporter domains span residues 20–255 (LAFR…MVGR) and 268–511 (IGSE…MLRT). Residue 52–59 (GENGAGKS) coordinates ATP.

Belongs to the ABC transporter superfamily. Arabinose importer (TC 3.A.1.2.2) family. The complex is composed of two ATP-binding proteins (AraG), two transmembrane proteins (AraH) and a solute-binding protein (AraF).

Its subcellular location is the cell inner membrane. The enzyme catalyses L-arabinose(out) + ATP + H2O = L-arabinose(in) + ADP + phosphate + H(+). Functionally, part of the ABC transporter complex AraFGH involved in arabinose import. Responsible for energy coupling to the transport system. The polypeptide is Arabinose import ATP-binding protein AraG (Yersinia pestis bv. Antiqua (strain Antiqua)).